Here is a 305-residue protein sequence, read N- to C-terminus: MNSLVGDVPQSLSSLDDTTTCYNLDASCNKSLVEERPSKILKTTHISPNLHPFSSSNPPPPKHQPSSRILSFEKTGLHVMNHNSPNLIFSPKDEEIGLPEHKKAELIIRGTKRAQSLTRSQSNAQDHILAERKRREKLTQRFVALSALIPGLKKMDKASVLGDAIKHIKYLQESVKEYEEQKKEKTMESVVLVKKSSLVLDENHQPSSSSSSDGNRNSSSSNLPEIEVRVSGKDVLIKILCEKQKGNVIKIMGEIEKLGLSITNSNVLPFGPTFDISIIAQKNNNFDMKIEDVVKNLSFGLSKLT.

Residues 41–67 (LKTTHISPNLHPFSSSNPPPPKHQPSS) are disordered. Polar residues predominate over residues 44–56 (THISPNLHPFSSS). Residues 122–171 (SNAQDHILAERKRREKLTQRFVALSALIPGLKKMDKASVLGDAIKHIKYL) form the bHLH domain. The segment at 201–224 (DENHQPSSSSSSDGNRNSSSSNLP) is disordered. Low complexity predominate over residues 207 to 222 (SSSSSSDGNRNSSSSN).

In terms of assembly, homodimer. Expressed in roots.

The protein localises to the nucleus. The chain is Transcription factor bHLH18 (BHLH18) from Arabidopsis thaliana (Mouse-ear cress).